The chain runs to 635 residues: Sodium- and chloride-dependent creatine transporter 1 (635 aa).

The segment covering 1–11 (MANKSTENGIY) has biased composition (polar residues). Residues 1–27 (MANKSTENGIYSVSGEEKKGPLIAPGP) form a disordered region. The Cytoplasmic segment spans residues 1–60 (MANKSTENGIYSVSGEEKKGPLIAPGPDGAPAKGDGPAALGAPGSLLAVPPRETWTRQMD). A helical membrane pass occupies residues 61-81 (FIMSCVGFAVGLGNVWRFPYL). The Extracellular portion of the chain corresponds to 82-87 (CYKNGG). Residues 88-108 (GVFLIPYILIALIGGIPIFFL) traverse the membrane as a helical segment. The Cytoplasmic segment spans residues 109 to 138 (EISLGQFMKAGSINVWNICPLFKGLGYASM). The helical transmembrane segment at 139–159 (VIVFYCNTYYIMVLAWGFYYL) threads the bilayer. The Extracellular segment spans residues 160–230 (VKSFTTTLPW…LSEGLEVPGA (71 aa)). Asn192 and Asn197 each carry an N-linked (GlcNAc...) asparagine glycan. The chain crosses the membrane as a helical span at residues 231 to 251 (LNWEVTLCLLTCWVLVYFCVW). Residues 252–269 (KGVKSTGKIVYFTATFPY) lie on the Cytoplasmic side of the membrane. The chain crosses the membrane as a helical span at residues 270–290 (VVLVVLLVRGVLLPGALDGII). Residues 291–304 (YYLKPDWSKLASPQ) lie on the Extracellular side of the membrane. Residues 305–325 (VWIDAGTQIFFSYAIGLGALT) form a helical membrane-spanning segment. Topologically, residues 326–341 (ALGSYNRFNNNCYKDA) are cytoplasmic. A helical transmembrane segment spans residues 342-362 (IILALINSGTSFFAGFVVFSI). Over 363 to 394 (LGFMATEQGVHISKVAESGPGLAFIAYPRAVT) the chain is Extracellular. A helical membrane pass occupies residues 395–415 (LMPVAPLWAALFFFMLLLLGL). The Cytoplasmic portion of the chain corresponds to 416–444 (DSQFVGVEGFITGLLDLLPASYYFRFQRE). A helical membrane pass occupies residues 445–465 (ISVALCCTICFVIDLSMVTDG). Topologically, residues 466–479 (GMYVFQLFDYYSAS) are extracellular. Residues 480–500 (GTTLLWQAFWECVVVAWVYGA) form a helical membrane-spanning segment. The Cytoplasmic segment spans residues 501–520 (DRFMDDVACMIGYRPCPWMK). Residues 521 to 541 (WCWSFFTPLVCMGIFIFNVVY) form a helical membrane-spanning segment. The Extracellular segment spans residues 542 to 560 (HEPLVYNNTYVYPWWGEAV). N-linked (GlcNAc...) asparagine glycosylation is present at Asn548. A helical transmembrane segment spans residues 561-581 (GWAFALSSMLCVPLHLLGCLL). At 582–635 (RAKGTMAERWQHLTQPIWGLHHLEYRAQDSDVRGLTTLTPVSESSKVVVVESVM) the chain is on the cytoplasmic side. Thr617 and Thr620 each carry phosphothreonine. Ser623 is subject to Phosphoserine.

The protein belongs to the sodium:neurotransmitter symporter (SNF) (TC 2.A.22) family. SLC6A8 subfamily. Post-translationally, glycosylated.

It is found in the cell membrane. The protein localises to the apical cell membrane. It catalyses the reaction creatine(out) + chloride(out) + 2 Na(+)(out) = creatine(in) + chloride(in) + 2 Na(+)(in). Its function is as follows. Creatine:sodium symporter which mediates the uptake of creatine. Plays an important role in supplying creatine to the brain via the blood-brain barrier. The chain is Sodium- and chloride-dependent creatine transporter 1 (SLC6A8) from Bos taurus (Bovine).